Consider the following 375-residue polypeptide: 23S rRNA (uracil(747)-C(5))-methyltransferase RlmC (375 aa).

[4Fe-4S] cluster-binding residues include Cys-3, Cys-11, Cys-14, and Cys-87. 4 residues coordinate S-adenosyl-L-methionine: Gln-212, Phe-241, Glu-262, and Asn-307. The Nucleophile role is filled by Cys-334.

Belongs to the class I-like SAM-binding methyltransferase superfamily. RNA M5U methyltransferase family. RlmC subfamily.

The enzyme catalyses uridine(747) in 23S rRNA + S-adenosyl-L-methionine = 5-methyluridine(747) in 23S rRNA + S-adenosyl-L-homocysteine + H(+). In terms of biological role, catalyzes the formation of 5-methyl-uridine at position 747 (m5U747) in 23S rRNA. The polypeptide is 23S rRNA (uracil(747)-C(5))-methyltransferase RlmC (Cronobacter sakazakii (strain ATCC BAA-894) (Enterobacter sakazakii)).